The sequence spans 46 residues: Cysteine-rich venom protein asurin-1 (46 aa).

This sequence belongs to the CRISP family. In terms of processing, contains 8 disulfide bonds. Expressed by the venom gland.

It localises to the secreted. In terms of biological role, blocks contraction of smooth muscle elicited by high potassium-induced depolarization, but does not block caffeine-stimulated contraction. May target voltage-gated calcium channels on smooth muscle. This chain is Cysteine-rich venom protein asurin-1, found in Austrelaps superbus (Lowland copperhead snake).